Reading from the N-terminus, the 247-residue chain is MSKLFWAMLSFITRLPVPRRWSQGLDFEHYSRGIITFPLIGLLLGAISGLVFMVLQAWCGAPLAALFSVLVLALMTGEFHLDGLADTCDGVFSARSRDRMLEIMRDSRLGTHGGLALIFVVLAKILVLSELALRGEPILASLAAACAVSRGTAALLMYRHRYAREEGLGNVFIGKIDGRQTCVTLGLAAIFAAVLLLGMHGVAAMVVTMVAIFILGQLLKRTLGGQTGDTLGAAIELGELVFLLALL.

A run of 5 helical transmembrane segments spans residues I34–V54, A57–G77, G113–L133, I138–Y158, and V194–I214.

This sequence belongs to the CobS family. Mg(2+) serves as cofactor.

It is found in the cell inner membrane. It carries out the reaction alpha-ribazole + adenosylcob(III)inamide-GDP = adenosylcob(III)alamin + GMP + H(+). It catalyses the reaction alpha-ribazole 5'-phosphate + adenosylcob(III)inamide-GDP = adenosylcob(III)alamin 5'-phosphate + GMP + H(+). It participates in cofactor biosynthesis; adenosylcobalamin biosynthesis; adenosylcobalamin from cob(II)yrinate a,c-diamide: step 7/7. Its function is as follows. Joins adenosylcobinamide-GDP and alpha-ribazole to generate adenosylcobalamin (Ado-cobalamin). Also synthesizes adenosylcobalamin 5'-phosphate from adenosylcobinamide-GDP and alpha-ribazole 5'-phosphate. This Shigella flexneri protein is Adenosylcobinamide-GDP ribazoletransferase.